A 520-amino-acid chain; its full sequence is Amine oxidase [flavin-containing] B (520 aa).

At Ser2 the chain carries N-acetylserine. Residues 2–489 lie on the Cytoplasmic side of the membrane; that stretch reads SGKCDVVVVG…TFLERHLPSV (488 aa). Lys52 carries the post-translational modification N6-acetyllysine. Cys397 carries the post-translational modification S-8alpha-FAD cysteine. Residues 490-516 form a helical; Anchor for type IV membrane protein membrane-spanning segment; sequence PGLLRLIGLTAIFSATALGVLAHKRGL. Residues 517 to 520 lie on the Mitochondrial intermembrane side of the membrane; it reads LVRV.

This sequence belongs to the flavin monoamine oxidase family. As to quaternary structure, monomer, homo- or heterodimer (containing two subunits of similar size). Each subunit contains a covalently bound flavin. Enzymatically active as monomer. FAD is required as a cofactor.

The protein resides in the mitochondrion outer membrane. The enzyme catalyses a secondary aliphatic amine + O2 + H2O = a primary amine + an aldehyde + H2O2. It carries out the reaction (R)-adrenaline + O2 + H2O = (R)-3,4-dihydroxymandelaldehyde + methylamine + H2O2. The catalysed reaction is a primary methyl amine + O2 + H2O = an aldehyde + H2O2 + NH4(+). It catalyses the reaction benzylamine + O2 + H2O = benzaldehyde + H2O2 + NH4(+). The enzyme catalyses dopamine + O2 + H2O = 3,4-dihydroxyphenylacetaldehyde + H2O2 + NH4(+). It carries out the reaction tyramine + O2 + H2O = (4-hydroxyphenyl)acetaldehyde + H2O2 + NH4(+). The catalysed reaction is (R)-noradrenaline + O2 + H2O = (R)-3,4-dihydroxymandelaldehyde + H2O2 + NH4(+). It catalyses the reaction 2-phenylethylamine + O2 + H2O = 2-phenylacetaldehyde + H2O2 + NH4(+). The enzyme catalyses N-acetylputrescine + O2 + H2O = 4-acetamidobutanal + H2O2 + NH4(+). Its function is as follows. Catalyzes the oxidative deamination of primary and some secondary amines such as neurotransmitters, and exogenous amines including the tertiary amine, neurotoxin 1-methyl-4-phenyl-1,2,3,6-tetrahydropyridine (MPTP), with concomitant reduction of oxygen to hydrogen peroxide and participates in the metabolism of neuroactive and vasoactive amines in the central nervous system and peripheral tissues. Preferentially degrades benzylamine and phenylethylamine. The protein is Amine oxidase [flavin-containing] B of Canis lupus familiaris (Dog).